A 391-amino-acid polypeptide reads, in one-letter code: Protein Wnt-2b (391 aa).

Disulfide bonds link C107–C118, C158–C166, C168–C188, C237–C251, and C239–C246. N117 carries N-linked (GlcNAc...) asparagine glycosylation. S243 carries O-palmitoleoyl serine; by PORCN lipidation. A glycan (N-linked (GlcNAc...) asparagine) is linked at N283. 6 disulfides stabilise this stretch: C309-C340, C325-C335, C339-C379, C355-C370, C357-C367, and C362-C363.

The protein belongs to the Wnt family. Forms a soluble 1:1 complex with AFM; this prevents oligomerization and is required for prolonged biological activity. The complex with AFM may represent the physiological form in body fluids. Interacts with FZD4 and FZD5. In terms of processing, palmitoleoylation is required for efficient binding to frizzled receptors. Depalmitoleoylation leads to Wnt signaling pathway inhibition. As to expression, isoform 1 is expressed in adult heart, brain, placenta, lung, prostate, testis, ovary, small intestine and colon. In the adult brain, it is mainly found in the caudate nucleus, subthalamic nucleus and thalamus. Also detected in fetal brain, lung and kidney. Isoform 2 is expressed in fetal brain, fetal lung, fetal kidney, caudate nucleus, testis and cancer cell lines.

Its subcellular location is the secreted. It localises to the extracellular space. It is found in the extracellular matrix. Its function is as follows. Ligand for members of the frizzled family of seven transmembrane receptors. Functions in the canonical Wnt/beta-catenin signaling pathway. Plays a redundant role in embryonic lung development. The protein is Protein Wnt-2b (WNT2B) of Homo sapiens (Human).